We begin with the raw amino-acid sequence, 697 residues long: Portal protein (697 aa).

The segment at 633–697 (MSREAAGGVP…RRAGGPYGFH (65 aa)) is disordered. Basic and acidic residues predominate over residues 664–689 (ITADEERRGPERVGRFRNGGPDDPRR).

Belongs to the herpesviridae portal protein family. Homododecamerizes. Interacts with terminase subunits TRM1 and TRM3.

The protein resides in the virion. Its subcellular location is the host nucleus. Its function is as follows. Forms a portal in the viral capsid through which viral DNA is translocated during DNA packaging. Assembles as a dodecamer at a single fivefold axe of the T=16 icosahedric capsid. Binds to the molecular motor that translocates the viral DNA, termed terminase. The protein is Portal protein (UL104) of Homo sapiens (Human).